The primary structure comprises 459 residues: Bifunctional protein GlmU (459 aa).

The segment at 1–230 is pyrophosphorylase; that stretch reads MVKRYAVILA…FEETIGVNDR (230 aa). Residues 9-12, K23, Q73, and 78-79 contribute to the UDP-N-acetyl-alpha-D-glucosamine site; these read LAAG and GT. D103 lines the Mg(2+) pocket. UDP-N-acetyl-alpha-D-glucosamine contacts are provided by G140, E155, N170, and N228. N228 contacts Mg(2+). Residues 231-251 are linker; the sequence is VALAEAEKIMRERICRKHMMN. The N-acetyltransferase stretch occupies residues 252–459; that stretch reads GVTIIDPAHT…VDRLSIKKNS (208 aa). Positions 333 and 351 each coordinate UDP-N-acetyl-alpha-D-glucosamine. The Proton acceptor role is filled by H363. Y366 and N377 together coordinate UDP-N-acetyl-alpha-D-glucosamine. Acetyl-CoA-binding positions include 386 to 387, A423, and R440; that span reads NY.

It in the N-terminal section; belongs to the N-acetylglucosamine-1-phosphate uridyltransferase family. This sequence in the C-terminal section; belongs to the transferase hexapeptide repeat family. In terms of assembly, homotrimer. Mg(2+) serves as cofactor.

It localises to the cytoplasm. It carries out the reaction alpha-D-glucosamine 1-phosphate + acetyl-CoA = N-acetyl-alpha-D-glucosamine 1-phosphate + CoA + H(+). It catalyses the reaction N-acetyl-alpha-D-glucosamine 1-phosphate + UTP + H(+) = UDP-N-acetyl-alpha-D-glucosamine + diphosphate. The protein operates within nucleotide-sugar biosynthesis; UDP-N-acetyl-alpha-D-glucosamine biosynthesis; N-acetyl-alpha-D-glucosamine 1-phosphate from alpha-D-glucosamine 6-phosphate (route II): step 2/2. Its pathway is nucleotide-sugar biosynthesis; UDP-N-acetyl-alpha-D-glucosamine biosynthesis; UDP-N-acetyl-alpha-D-glucosamine from N-acetyl-alpha-D-glucosamine 1-phosphate: step 1/1. It participates in bacterial outer membrane biogenesis; LPS lipid A biosynthesis. Its function is as follows. Catalyzes the last two sequential reactions in the de novo biosynthetic pathway for UDP-N-acetylglucosamine (UDP-GlcNAc). The C-terminal domain catalyzes the transfer of acetyl group from acetyl coenzyme A to glucosamine-1-phosphate (GlcN-1-P) to produce N-acetylglucosamine-1-phosphate (GlcNAc-1-P), which is converted into UDP-GlcNAc by the transfer of uridine 5-monophosphate (from uridine 5-triphosphate), a reaction catalyzed by the N-terminal domain. In Geobacillus sp. (strain WCH70), this protein is Bifunctional protein GlmU.